A 388-amino-acid polypeptide reads, in one-letter code: Methylthioribose-1-phosphate isomerase (388 aa).

Aspartate 258 acts as the Proton donor in catalysis.

The protein belongs to the eIF-2B alpha/beta/delta subunits family. MtnA subfamily.

It localises to the cytoplasm. It is found in the nucleus. It catalyses the reaction 5-(methylsulfanyl)-alpha-D-ribose 1-phosphate = 5-(methylsulfanyl)-D-ribulose 1-phosphate. It participates in amino-acid biosynthesis; L-methionine biosynthesis via salvage pathway; L-methionine from S-methyl-5-thio-alpha-D-ribose 1-phosphate: step 1/6. Catalyzes the interconversion of methylthioribose-1-phosphate (MTR-1-P) into methylthioribulose-1-phosphate (MTRu-1-P). The polypeptide is Methylthioribose-1-phosphate isomerase (mri-1) (Neurospora crassa (strain ATCC 24698 / 74-OR23-1A / CBS 708.71 / DSM 1257 / FGSC 987)).